Reading from the N-terminus, the 977-residue chain is SLIT and NTRK-like protein 3 (977 aa).

The signal sequence occupies residues 1–26 (MKPSIAEMLHRGRMLWIILLSTIALG). Topologically, residues 29 to 654 (TPIPLIEDSE…SPPGGPVPLS (626 aa)) are extracellular. Asn-68 carries N-linked (GlcNAc...) asparagine glycosylation. 6 LRR repeats span residues 78-99 (RPFKLYLQRNSMRKLYTNSFLH), 102-123 (NAVSINLGNNALQDIQTGAFNG), 126-147 (ILKRLYLHENKLDVFRNDTFLG), 150-171 (SLEYLQADYNVIKRIESGAFRN), 174-195 (KLRVLILNDNLIPMLPTNLFKA), and 197-218 (SLTHLDLRGNRLKVLFYRGMLD). The LRRCT 1 domain maps to 232-283 (NPWNCTCEIVQLKSWLERIPYTALVGDITCETPFHFHGKDLREIRKTELCPL). The segment at 325 to 360 (EYKSSNKQPKPTKQPRTPRPPSTSQALYPGPNQPPI) is disordered. In terms of domain architecture, LRRNT spans 364–406 (QTRPPIPIICPTGCTCNLHINDLGLTVNCKERGFNNISELLPR). 6 LRR repeats span residues 409–430 (NAKKLYLSSNLIQKIYRSDFWN), 433–454 (SLDLLHLGNNRISYVQDGAFIN), 457–478 (NLKSLFLNGNDIEKLTPGMFRG), 481–502 (SLHYLYFEFNVIREIQPAAFSL), 505–526 (NLKLLFLNNNLLRTLPTDAFAG), and 528–549 (SLARLNLRKNYFLYLPVAGVLE). Residues 562–613 (NPWDCTCDLVPFKQWIETISSVSVVGDVLCRSPENLTHRDVRTIELEVLCPE) enclose the LRRCT 2 domain. N-linked (GlcNAc...) asparagine glycosylation is present at Asn-596. Residues 655–675 (VLILSLLVLFFSAVFVAAGLF) traverse the membrane as a helical segment. Topologically, residues 676–977 (AYVLRRRRKK…EVLEKTTYRF (302 aa)) are cytoplasmic. Disordered regions lie at residues 708 to 735 (LFEDGGGGGGGSGGGGRPTLSSPEKAPP) and 761 to 790 (EEEVAVSSAQEAGSAERGGPGTQPPGMGEA). Residues 711–724 (DGGGGGGGSGGGGR) are compositionally biased toward gly residues. Over residues 765–775 (AVSSAQEAGSA) the composition is skewed to low complexity.

It belongs to the SLITRK family. Expressed in the occipital lobe of the cerebral cortex of the brain. Expressed at higher levels in some astrocytic brain tumors such as astrocytomas, oligodendrogliomas, glioblastomas, gangliogliomas and primitive neuroectodermal tumors.

It is found in the membrane. In terms of biological role, suppresses neurite outgrowth. This is SLIT and NTRK-like protein 3 (SLITRK3) from Homo sapiens (Human).